A 157-amino-acid polypeptide reads, in one-letter code: MGRLIFLSFGWLVVFLSLSGTGADFQCPSEWSAYGQHCYRAFSDLKTWEDAEKFCTEQEKAGHLVSIQSIQEANFVAQLVSGFISGSPKIYIWIGLRDRRKEQQCSSEWNDGSKVIYVNWREGESQMCQALTKWTEFHQWLNTDCAGHYPFICKSRV.

A signal peptide spans 1–23 (MGRLIFLSFGWLVVFLSLSGTGA). 3 disulfides stabilise this stretch: Cys-27-Cys-38, Cys-55-Cys-153, and Cys-128-Cys-145. The C-type lectin domain maps to 34 to 154 (YGQHCYRAFS…CAGHYPFICK (121 aa)).

Belongs to the snaclec family. In terms of assembly, heterodimer; disulfide-linked. Expressed by the venom gland.

It localises to the secreted. In terms of biological role, interferes with one step of hemostasis (modulation of platelet aggregation, or coagulation cascade, for example). This is Snaclec 3 from Bitis gabonica (Gaboon adder).